A 143-amino-acid polypeptide reads, in one-letter code: 3-hydroxyacyl-[acyl-carrier-protein] dehydratase FabZ (143 aa).

His-47 is an active-site residue.

The protein belongs to the thioester dehydratase family. FabZ subfamily.

It is found in the cytoplasm. It catalyses the reaction a (3R)-hydroxyacyl-[ACP] = a (2E)-enoyl-[ACP] + H2O. Involved in unsaturated fatty acids biosynthesis. Catalyzes the dehydration of short chain beta-hydroxyacyl-ACPs and long chain saturated and unsaturated beta-hydroxyacyl-ACPs. This is 3-hydroxyacyl-[acyl-carrier-protein] dehydratase FabZ from Moorella thermoacetica (strain ATCC 39073 / JCM 9320).